We begin with the raw amino-acid sequence, 417 residues long: Phosphoglycerate kinase 1 (417 aa).

V23, D24, F25, N26, N38, R39, S62, H63, G65, R66, L121, R122, H168, and R169 together coordinate (2R)-3-phosphoglycerate. G212 serves as a coordination point for ADP. G212 contacts CDP. AMP contacts are provided by A213 and K214. A213 provides a ligand contact to ATP. Residue A213 coordinates Mg(2+). Residue D217 coordinates CDP. D217 is a binding site for Mg(2+). K218 lines the AMP pocket. K218 is a binding site for ATP. Position 236 (G236) interacts with ADP. G236 is a binding site for CDP. Positions 237 and 311 each coordinate AMP. 2 residues coordinate ATP: G237 and G311. CDP contacts are provided by G336 and F341. An ADP-binding site is contributed by F341. E342 is an AMP binding site. The ATP site is built by E342, D374, and T375. A Mg(2+)-binding site is contributed by D374.

Belongs to the phosphoglycerate kinase family. In terms of assembly, monomer. It depends on Mg(2+) as a cofactor.

The protein resides in the cytoplasm. Its subcellular location is the mitochondrion. It carries out the reaction (2R)-3-phosphoglycerate + ATP = (2R)-3-phospho-glyceroyl phosphate + ADP. It functions in the pathway carbohydrate degradation; glycolysis; pyruvate from D-glyceraldehyde 3-phosphate: step 2/5. Functionally, catalyzes one of the two ATP producing reactions in the glycolytic pathway via the reversible conversion of 1,3-diphosphoglycerate to 3-phosphoglycerate. Both L- and D- forms of purine and pyrimidine nucleotides can be used as substrates, but the activity is much lower on pyrimidines. Negatively regulates the biosynthesis of acetyl-CoA from pyruvate in the mitochondrion. This chain is Phosphoglycerate kinase 1 (PGK1), found in Rhizopus niveus.